The chain runs to 786 residues: Pheromone-regulated membrane protein 10 (786 aa).

Residues 1-28 (MADSGDKDVSKSVRFDKESIESKKRSSV) show a composition bias toward basic and acidic residues. Disordered stretches follow at residues 1–65 (MADS…EDGN) and 77–103 (NGGAGLAPGLSKANSNQEKTDLEDNDN). Low complexity predominate over residues 29–42 (DDSASSYSSSSSGQ). The next 10 helical transmembrane spans lie at 469-489 (WVCVFLYGFCSAMVTPYAFGG), 491-511 (WINLAITFFMGSCVGMMQFIL), 521-541 (VFEITASIVVSFCGRAFGSIP), 545-565 (ICFGAITQGSLALILPGYIIL), 584-604 (FYAIIYSLFLGFGITLGAALF), 620-640 (PISPWFRFLFVPAFTIGISLI), 645-665 (WTQLPAMVFISCTGYVVTYWS), 675-695 (FTAALASFVIGILGNLYSRIW), 697-717 (GLAVSAMLPAIFVQVPSGIAS), and 751-771 (FGITMIEVSIGISVGLFASTL).

Belongs to the ThrE exporter (TC 2.A.79) family.

The protein localises to the membrane. The polypeptide is Pheromone-regulated membrane protein 10 (Candida glabrata (strain ATCC 2001 / BCRC 20586 / JCM 3761 / NBRC 0622 / NRRL Y-65 / CBS 138) (Yeast)).